Here is a 291-residue protein sequence, read N- to C-terminus: Elongation factor Ts (291 aa).

Residues 82–85 (TDFC) form an involved in Mg(2+) ion dislocation from EF-Tu region.

It belongs to the EF-Ts family.

The protein resides in the cytoplasm. Its function is as follows. Associates with the EF-Tu.GDP complex and induces the exchange of GDP to GTP. It remains bound to the aminoacyl-tRNA.EF-Tu.GTP complex up to the GTP hydrolysis stage on the ribosome. This is Elongation factor Ts from Methylobacillus flagellatus (strain ATCC 51484 / DSM 6875 / VKM B-1610 / KT).